Here is a 482-residue protein sequence, read N- to C-terminus: U2 small nuclear ribonucleoprotein auxiliary factor 35 kDa subunit-related protein 2 (482 aa).

Residues 1–59 (MAAPEKMTFPEKPSHKKYRAALKKEKRKKRRQELARLRDSGLSQKEEEEDTFIEEQQLE) are disordered. Residues 14 to 31 (SHKKYRAALKKEKRKKRR) are compositionally biased toward basic residues. Residue Lys45 forms a Glycyl lysine isopeptide (Lys-Gly) (interchain with G-Cter in SUMO2) linkage. A compositionally biased stretch (acidic residues) spans 46–58 (EEEEDTFIEEQQL). Lys62 participates in a covalent cross-link: Glycyl lysine isopeptide (Lys-Gly) (interchain with G-Cter in SUMO2). Positions 115 to 135 (QRKEREEEEQKRQEKKEKEEA) are disordered. The C3H1-type 1 zinc-finger motif lies at 166-194 (EKDRANCPFYSKTGACRFGDRCSRKHNFP). The 107-residue stretch at 198–304 (PTLLIKSMFT…RQLQCEFCPV (107 aa)) folds into the RRM domain. Residues 306 to 333 (RWKMAICGLFEIQQCPRGKHCNFLHVFR) form a C3H1-type 2 zinc finger. Position 349 is a phosphoserine (Ser349). The interval 351 to 482 (DRTGSSFGKN…DRTVQSPKSK (132 aa)) is disordered. Basic and acidic residues-rich tracts occupy residues 360–375 (NSER…DYYS) and 383–398 (PSPD…SERK). Ser384 bears the Phosphoserine mark. A compositionally biased stretch (basic residues) spans 399-412 (SSRHRGKKSHKRTS). Basic and acidic residues predominate over residues 413 to 435 (KSRERHNSRSRGRNRDRSRDRSR). Residues 436–454 (GRGSRSRSRSRSRRSRRSR) show a composition bias toward basic residues.

Component of the U11/U12 snRNPs that are part of the U12-type spliceosome. Interacts (via RS domain) with SRSF1 and SRSF2. Interacts with U2AF2/U2AF65. In terms of processing, phosphorylated in the RS domain by SRPK1. As to expression, widely expressed.

Its subcellular location is the nucleus. Its function is as follows. Pre-mRNA-binding protein required for splicing of both U2- and U12-type introns. Selectively interacts with the 3'-splice site of U2- and U12-type pre-mRNAs and promotes different steps in U2 and U12 intron splicing. Recruited to U12 pre-mRNAs in an ATP-dependent manner and is required for assembly of the pre-spliceosome, a precursor to other spliceosomal complexes. For U2-type introns, it is selectively and specifically required for the second step of splicing. The sequence is that of U2 small nuclear ribonucleoprotein auxiliary factor 35 kDa subunit-related protein 2 (ZRSR2) from Homo sapiens (Human).